Reading from the N-terminus, the 283-residue chain is Gap junction beta-1 protein (283 aa).

The Cytoplasmic portion of the chain corresponds to 1–22 (MNWTGLYTLLSGVNRHSTAIGR). A helical transmembrane segment spans residues 23–45 (VWLSVIFIFRIMVLVVAAESVWG). Topologically, residues 46–75 (DEKSSFICNTLQPGCNSVCYDQFFPISHVR) are extracellular. Residues 76 to 95 (LWSLQLILVSTPALLVAMHV) traverse the membrane as a helical segment. Residues 96-130 (AHQQHIEKKMLRLEGHGDPLHLEEVKRHKVHISGT) lie on the Cytoplasmic side of the membrane. The chain crosses the membrane as a helical span at residues 131–153 (LWWTYVISVVFRLLFEAVFMYVF). At 154–191 (YLLYPGYAMVRLVKCDVYPCPNTVDCFVSRPTEKTVFT) the chain is on the extracellular side. The chain crosses the membrane as a helical span at residues 192-214 (VFMLAASGICIILNVAEVVYLII). The Cytoplasmic segment spans residues 215-283 (RACARRAQRR…AEKSDRCSAC (69 aa)). Ser-233, Ser-258, Ser-266, and Ser-277 each carry phosphoserine.

It belongs to the connexin family. Beta-type (group I) subfamily. A connexon is composed of a hexamer of connexins. Interacts with CNST.

The protein resides in the cell membrane. Its subcellular location is the cell junction. It localises to the gap junction. One gap junction consists of a cluster of closely packed pairs of transmembrane channels, the connexons, through which materials of low MW diffuse from one cell to a neighboring cell. The sequence is that of Gap junction beta-1 protein (GJB1) from Homo sapiens (Human).